Reading from the N-terminus, the 186-residue chain is Translation initiation factor IF-3 (186 aa).

The protein belongs to the IF-3 family. Monomer.

It is found in the cytoplasm. In terms of biological role, IF-3 binds to the 30S ribosomal subunit and shifts the equilibrium between 70S ribosomes and their 50S and 30S subunits in favor of the free subunits, thus enhancing the availability of 30S subunits on which protein synthesis initiation begins. This Borrelia garinii subsp. bavariensis (strain ATCC BAA-2496 / DSM 23469 / PBi) (Borreliella bavariensis) protein is Translation initiation factor IF-3.